The chain runs to 300 residues: tRNA pseudouridine synthase B (300 aa).

Residue Asp-38 is the Nucleophile of the active site.

This sequence belongs to the pseudouridine synthase TruB family. Type 1 subfamily.

The enzyme catalyses uridine(55) in tRNA = pseudouridine(55) in tRNA. Its function is as follows. Responsible for synthesis of pseudouridine from uracil-55 in the psi GC loop of transfer RNAs. This chain is tRNA pseudouridine synthase B, found in Dehalococcoides mccartyi (strain CBDB1).